The following is a 29-amino-acid chain: Cyclotide mech-3 (29 aa).

A cross-link (cyclopeptide (Gly-Asn)) is located at residues 1 to 29 (GLPTCGETCTLGKCNTPKCTCNWPICYKN). Disulfide bonds link C5-C19, C9-C21, and C14-C26.

This is a cyclic peptide. In terms of processing, contains 3 disulfide bonds.

Probably participates in a plant defense mechanism (Potential). Binds to and induces leakage in phospholipd membranes, particularly ones containing 1-palmitoyl-2-oleophosphatidylethanolamine (POPE). In vitro, displays cytotoxicity against cultured cells but no hemolytic activity towards fresh erythrocytes. The sequence is that of Cyclotide mech-3 from Melicytus chathamicus (Chatham Island mahoe).